Here is a 190-residue protein sequence, read N- to C-terminus: Apolipoprotein M (190 aa).

The segment at residues 1–22 (MFHQVWAALLSLYGLLFNSMNQ) is a signal peptide (not cleaved). Disulfide bonds link Cys-23–Cys-169, Cys-95–Cys-185, and Cys-130–Cys-159. Tetradecanoate is bound by residues Glu-138 and Arg-145.

The protein belongs to the calycin superfamily. Lipocalin family. Highly divergent. As to quaternary structure, interacts with LRP2; LRP2 mediates APOM renal uptake and subsequent lysosomal degradation. In terms of tissue distribution, expressed by the liver; secreted in plasma.

It is found in the secreted. Functionally, probably involved in lipid transport. Can bind sphingosine-1-phosphate, myristic acid, palmitic acid and stearic acid, retinol, all-trans-retinoic acid and 9-cis-retinoic acid. The polypeptide is Apolipoprotein M (Apom) (Mus musculus (Mouse)).